Reading from the N-terminus, the 215-residue chain is Small ribosomal subunit protein uS7 (215 aa).

The protein belongs to the universal ribosomal protein uS7 family. In terms of assembly, part of the 30S ribosomal subunit.

In terms of biological role, one of the primary rRNA binding proteins, it binds directly to 16S rRNA where it nucleates assembly of the head domain of the 30S subunit. Is located at the subunit interface close to the decoding center. In Pyrococcus furiosus (strain ATCC 43587 / DSM 3638 / JCM 8422 / Vc1), this protein is Small ribosomal subunit protein uS7.